A 328-amino-acid polypeptide reads, in one-letter code: Probable cell division protein WhiA (328 aa).

Residues 276-309 constitute a DNA-binding region (H-T-H motif); that stretch reads SLEELGRLADPQMTKDAVAGRIRRLLHMADKKAS.

Belongs to the WhiA family.

Functionally, involved in cell division and chromosome segregation. This is Probable cell division protein WhiA from Corynebacterium diphtheriae (strain ATCC 700971 / NCTC 13129 / Biotype gravis).